Reading from the N-terminus, the 205-residue chain is HTH-type transcriptional regulator LuxR (205 aa).

In terms of domain architecture, HTH tetR-type spans 15–75 (LKRKQQLMEI…EVLNHVVRQF (61 aa)). The H-T-H motif DNA-binding region spans 39–58 (HADIAEIAQVSVATVFNYFP).

Its function is as follows. Regulatory protein of bacterial bioluminescence. It probably binds the autoinducer molecule and potentiates the transcription of the bioluminescence operon. The protein is HTH-type transcriptional regulator LuxR (luxR) of Vibrio harveyi (Beneckea harveyi).